Consider the following 254-residue polypeptide: Vesicle transport protein USE1 (254 aa).

Residues 1-228 are Cytoplasmic-facing; it reads MAYISENELK…AYKCGYDCFK (228 aa). The helical; Anchor for type IV membrane protein transmembrane segment at 229–249 threads the bilayer; sequence VMLIVLIFMSFVSMVLMMKIF. Residues 250-254 are Lumenal-facing; sequence KKAST.

Belongs to the USE1 family.

It is found in the endoplasmic reticulum membrane. Its function is as follows. SNARE that may be involved in targeting and fusion of Golgi-derived retrograde transport vesicles with the ER. This Caenorhabditis elegans protein is Vesicle transport protein USE1.